Reading from the N-terminus, the 185-residue chain is Ribosome-recycling factor (185 aa).

Belongs to the RRF family.

The protein localises to the cytoplasm. Functionally, responsible for the release of ribosomes from messenger RNA at the termination of protein biosynthesis. May increase the efficiency of translation by recycling ribosomes from one round of translation to another. In Histophilus somni (strain 2336) (Haemophilus somnus), this protein is Ribosome-recycling factor.